A 336-amino-acid chain; its full sequence is Deoxyhypusine hydroxylase (336 aa).

HEAT-like PBS-type repeat units lie at residues 68–94 (LKHELAYCLGQTRNTDALPFLLDVVQD) and 101–127 (CRHEAAEALGALGYESSLEVLKALRDN). Positions 70, 71, 103, and 104 each coordinate Fe cation. The tract at residues 158–179 (LKPSDFTSIDPAPPMPLTAKEP) is disordered. 2 HEAT-like PBS-type repeats span residues 235-261 (FRHEIAFVFGQLCHPASVPSLTETLSD) and 268-295 (VRHEAAEALGSLGDVEGVEDTLKKFLND). Fe cation is bound by residues histidine 237, glutamate 238, histidine 270, and glutamate 271.

Belongs to the deoxyhypusine hydroxylase family. The cofactor is Fe(2+).

Its subcellular location is the cytoplasm. It localises to the nucleus. The enzyme catalyses [eIF5A protein]-deoxyhypusine + AH2 + O2 = [eIF5A protein]-hypusine + A + H2O. It functions in the pathway protein modification; eIF5A hypusination. In terms of biological role, catalyzes the hydroxylation of the N(6)-(4-aminobutyl)-L-lysine intermediate to form hypusine, an essential post-translational modification only found in mature eIF-5A factor. This is Deoxyhypusine hydroxylase (lia1) from Emericella nidulans (strain FGSC A4 / ATCC 38163 / CBS 112.46 / NRRL 194 / M139) (Aspergillus nidulans).